The sequence spans 218 residues: Histone H1 (218 aa).

Composition is skewed to low complexity over residues 1–19 (MSET…GAKA) and 27–39 (AAGG…PAGP). Disordered stretches follow at residues 1–41 (MSET…GPSV) and 89–218 (VGKG…PKKK). Ser2 is modified (N-acetylserine). Residues 37 to 110 (AGPSVTELIT…GASGSFKLNK (74 aa)) enclose the H15 domain. Basic residues-rich tracts occupy residues 119 to 133 (ATKK…KPAA), 141 to 158 (KKPK…KAKK), 166 to 184 (KAAK…KKAA), and 191 to 218 (KAVK…PKKK).

This sequence belongs to the histone H1/H5 family.

The protein localises to the nucleus. It localises to the chromosome. In terms of biological role, histones H1 are necessary for the condensation of nucleosome chains into higher-order structures. The polypeptide is Histone H1 (Anas platyrhynchos (Mallard)).